We begin with the raw amino-acid sequence, 122 residues long: Glycine cleavage system H protein (122 aa).

Positions 19-101 (VVTVGITNYA…EKEGWLWKMT (83 aa)) constitute a Lipoyl-binding domain. Lysine 60 is subject to N6-lipoyllysine.

It belongs to the GcvH family. As to quaternary structure, the glycine cleavage system is composed of four proteins: P, T, L and H. (R)-lipoate serves as cofactor.

In terms of biological role, the glycine cleavage system catalyzes the degradation of glycine. The H protein shuttles the methylamine group of glycine from the P protein to the T protein. This Bartonella quintana (strain Toulouse) (Rochalimaea quintana) protein is Glycine cleavage system H protein.